A 434-amino-acid chain; its full sequence is Asparagine--tRNA ligase (434 aa).

The protein belongs to the class-II aminoacyl-tRNA synthetase family. In terms of assembly, homodimer.

It is found in the cytoplasm. It catalyses the reaction tRNA(Asn) + L-asparagine + ATP = L-asparaginyl-tRNA(Asn) + AMP + diphosphate + H(+). The chain is Asparagine--tRNA ligase from Oenococcus oeni (strain ATCC BAA-331 / PSU-1).